Here is a 236-residue protein sequence, read N- to C-terminus: VIGGVECNINEHRFLVALYTSRSRRFYCGGTLINQEWVLTAAHCDRKNIRIKLGMHSEKVPNEDAQTRVPKEKFFCLSSKTYTKWDKDIMLMRLKRPVNNSTHIAPVSLPSNPPSVGSVCRVMGWGTITSSQETHPDVPHCANINILDYEVCRAAYPELPVTRRTLCAGILEGGKDSCNGDSGGPLICNGQFQGIAYWGADTCAQPREPGLYTKVFDYTDWIQSIISGNTDATCPQ.

The 227-residue stretch at 1-227 folds into the Peptidase S1 domain; the sequence is VIGGVECNIN…YTDWIQSIIS (227 aa). A disulfide bridge connects residues cysteine 28 and cysteine 44. Residues histidine 43 and aspartate 88 each act as charge relay system in the active site. N-linked (GlcNAc...) asparagine glycosylation is found at asparagine 99 and asparagine 100. 3 disulfide bridges follow: cysteine 120–cysteine 188, cysteine 152–cysteine 167, and cysteine 178–cysteine 203. The active-site Charge relay system is the serine 182.

This sequence belongs to the peptidase S1 family. Snake venom subfamily. Monomer. Expressed by the venom gland.

It localises to the secreted. In terms of biological role, snake venom serine protease that may act in the hemostasis system of the prey. The protein is Snake venom serine protease ussurin of Gloydius ussuriensis (Ussuri mamushi).